Consider the following 396-residue polypeptide: Nucleolar protein 12 (396 aa).

A disordered region spans residues 43 to 104 (TDKDADGDEK…GKESKKSTKE (62 aa)). The span at 47–58 (ADGDEKMEDAAS) shows a compositional bias: acidic residues. A compositionally biased stretch (basic residues) spans 64 to 73 (KKPSKKKLAK). Residues 87 to 104 (EPEKLVEEGKESKKSTKE) are compositionally biased toward basic and acidic residues. 2 consecutive RRM domains span residues 112–220 (RTIF…SITH) and 228–312 (RSVF…RCKN). A disordered region spans residues 361 to 396 (TKDDSKPVLKKGKKERSKTGRVTKRSQAFKKSQQKK). The segment covering 368 to 396 (VLKKGKKERSKTGRVTKRSQAFKKSQQKK) has biased composition (basic residues).

The protein belongs to the RRM RBM34 family.

The protein resides in the nucleus. It localises to the nucleolus. Involved in pre-25S rRNA processing. The chain is Nucleolar protein 12 (NOP12) from Candida glabrata (strain ATCC 2001 / BCRC 20586 / JCM 3761 / NBRC 0622 / NRRL Y-65 / CBS 138) (Yeast).